The following is a 607-amino-acid chain: Autophagy-related protein 22-2 (607 aa).

Positions 1–29 (MTVAPPSPNSPAAELQQRPPRYPGEDTTP) are disordered. Residues 41–61 (YGIAAEVFAVCGVGSFLPLTL) form a helical membrane-spanning segment. Residue Asn-89 is glycosylated (N-linked (GlcNAc...) asparagine). Transmembrane regions (helical) follow at residues 119 to 139 (SFAM…LISF), 151 to 170 (TLLL…FVFI), and 188 to 208 (CLGS…ANDP). The segment at 235-263 (SFSASDAESGPHPAAEAGSGTSSGPASPE) is disordered. Residues 247–263 (PAAEAGSGTSSGPASPE) are compositionally biased toward low complexity. 4 helical membrane-spanning segments follow: residues 274 to 294 (GVGL…SLLF), 307 to 327 (TLPL…FTMV), 379 to 399 (VLVF…VSGT), and 415 to 435 (VGLL…LWPV). Asn-445 is a glycosylation site (N-linked (GlcNAc...) asparagine). 4 helical membrane-spanning segments follow: residues 450–470 (LCIA…IPVF), 485–507 (FPLA…SFFG), 519–541 (YALY…GMLI), and 550–570 (GFFF…IVNA). The tract at residues 586–607 (KGHETEMSEQTEEAEGLLARGI) is disordered.

It belongs to the ATG22 family.

Its subcellular location is the vacuole membrane. Its function is as follows. Vacuolar effluxer which mediate the efflux of amino acids resulting from autophagic degradation. The release of autophagic amino acids allows the maintenance of protein synthesis and viability during nitrogen starvation. The polypeptide is Autophagy-related protein 22-2 (atg22-2) (Aspergillus oryzae (strain ATCC 42149 / RIB 40) (Yellow koji mold)).